Consider the following 263-residue polypeptide: Probable ABC transporter permease protein slr1045 (263 aa).

The next 7 membrane-spanning stretches (helical) occupy residues 12 to 32 (LWFQ…LHIL), 52 to 72 (SMAI…IQVA), 97 to 117 (APVL…AAEI), 140 to 162 (LVVP…SLFV), 167 to 186 (GLVI…LNSV), 192 to 212 (LWDV…IAII), and 234 to 254 (AVVT…WLMF).

It belongs to the MlaE permease family.

It is found in the cell membrane. Functionally, could be part of an ABC transporter complex. In Synechocystis sp. (strain ATCC 27184 / PCC 6803 / Kazusa), this protein is Probable ABC transporter permease protein slr1045.